A 450-amino-acid chain; its full sequence is Coiled-coil domain-containing protein 149-A (450 aa).

Coiled-coil stretches lie at residues 1 to 197 and 259 to 286; these read MANQ…DRRK and IQHQRQTNRILGNRVADLERKLKTLEIS. The tract at residues 290 to 358 is disordered; that stretch reads SLPDDRTGRG…NGQVGTQLKE (69 aa). Residues 343 to 354 are compositionally biased toward polar residues; the sequence is PSGTRTNGQVGT.

It belongs to the CCDC149 family.

This chain is Coiled-coil domain-containing protein 149-A (ccdc149a), found in Danio rerio (Zebrafish).